The following is a 119-amino-acid chain: Large ribosomal subunit protein bL20 (119 aa).

This sequence belongs to the bacterial ribosomal protein bL20 family.

Functionally, binds directly to 23S ribosomal RNA and is necessary for the in vitro assembly process of the 50S ribosomal subunit. It is not involved in the protein synthesizing functions of that subunit. This is Large ribosomal subunit protein bL20 from Clostridium beijerinckii (strain ATCC 51743 / NCIMB 8052) (Clostridium acetobutylicum).